A 308-amino-acid chain; its full sequence is UDP-N-acetylenolpyruvoylglucosamine reductase (308 aa).

The region spanning 33–197 is the FAD-binding PCMH-type domain; the sequence is TGGNADFYLS…LEASFNLAPG (165 aa). The active site involves Arg-176. The active-site Proton donor is Ser-226. Glu-296 is a catalytic residue.

This sequence belongs to the MurB family. FAD serves as cofactor.

The protein localises to the cytoplasm. The catalysed reaction is UDP-N-acetyl-alpha-D-muramate + NADP(+) = UDP-N-acetyl-3-O-(1-carboxyvinyl)-alpha-D-glucosamine + NADPH + H(+). Its pathway is cell wall biogenesis; peptidoglycan biosynthesis. Its function is as follows. Cell wall formation. The sequence is that of UDP-N-acetylenolpyruvoylglucosamine reductase from Staphylococcus carnosus (strain TM300).